The chain runs to 150 residues: Deoxyuridine 5'-triphosphate nucleotidohydrolase (150 aa).

Substrate contacts are provided by residues 65 to 67 (RSG), asparagine 78, and 82 to 84 (TID). A disordered region spans residues 130-150 (LSDTERGEGGFGHTGVASKAE).

Belongs to the dUTPase family. It depends on Mg(2+) as a cofactor.

The catalysed reaction is dUTP + H2O = dUMP + diphosphate + H(+). Its pathway is pyrimidine metabolism; dUMP biosynthesis; dUMP from dCTP (dUTP route): step 2/2. Functionally, this enzyme is involved in nucleotide metabolism: it produces dUMP, the immediate precursor of thymidine nucleotides and it decreases the intracellular concentration of dUTP so that uracil cannot be incorporated into DNA. The polypeptide is Deoxyuridine 5'-triphosphate nucleotidohydrolase (Chlorobaculum parvum (strain DSM 263 / NCIMB 8327) (Chlorobium vibrioforme subsp. thiosulfatophilum)).